Consider the following 361-residue polypeptide: Putative agmatine deiminase (361 aa).

Cys-354 serves as the catalytic Amidino-cysteine intermediate.

It belongs to the agmatine deiminase family.

The enzyme catalyses agmatine + H2O = N-carbamoylputrescine + NH4(+). The chain is Putative agmatine deiminase from Streptococcus pneumoniae (strain P1031).